The primary structure comprises 471 residues: Putative multidrug resistance protein MdtD (471 aa).

The Periplasmic portion of the chain corresponds to 1–11; that stretch reads MTDLPDSTRWQ. The chain crosses the membrane as a helical span at residues 12–32; the sequence is LWIVAFGFFMQSLDTTIVNTA. Topologically, residues 33–48 are cytoplasmic; the sequence is LPSMAQSLGESPLHMH. The helical transmembrane segment at 49 to 69 threads the bilayer; the sequence is MVIVSYVLTVAVMLPASGWLA. Over 70–76 the chain is Periplasmic; that stretch reads DKVGVRN. The helical transmembrane segment at 77–97 threads the bilayer; the sequence is IFFTAIVLFTLGSLFCALSGT. Over 98–101 the chain is Cytoplasmic; that stretch reads LNEL. Residues 102–124 traverse the membrane as a helical segment; the sequence is LLARALQGVGGAMMVPVGRLTVM. Residues 125–137 are Periplasmic-facing; that stretch reads KIVPREQYMAAMT. A helical membrane pass occupies residues 138 to 158; sequence FVTLPGQVGPLLGPALGGLLV. Residues 159–164 are Cytoplasmic-facing; the sequence is EYASWH. Residues 165–185 traverse the membrane as a helical segment; sequence WIFLINIPVGIIGAIATLMLM. Over 186-196 the chain is Periplasmic; sequence PNYTMQTRRFD. A helical membrane pass occupies residues 197–217; it reads LSGFLLLAVGMAVLTLALDGS. Residues 218–224 are Cytoplasmic-facing; it reads KGTGFSP. A helical transmembrane segment spans residues 225–245; sequence LAIAGLVAVGVVALVLYLLHA. At 246–262 the chain is on the periplasmic side; that stretch reads QNNNRALFSLKLFRTRN. A helical membrane pass occupies residues 263 to 283; the sequence is FSLGLAGSFAGRIGSGMLPFM. At 284 to 285 the chain is on the cytoplasmic side; it reads TP. The chain crosses the membrane as a helical span at residues 286 to 306; sequence VFLQIGLGFSPFHAGLMMIPM. Topologically, residues 307 to 341 are periplasmic; it reads VLGSMGMKRIVVQVVNRFGYRRVLVATTLGLSLVT. A helical transmembrane segment spans residues 342-362; the sequence is LLFMTTALLGWYYVLPFVLFL. The Cytoplasmic portion of the chain corresponds to 363-395; the sequence is QGMVNSTRFSSMNTLTLKDLPDNLASSGNSLLS. Residues 396 to 416 form a helical membrane-spanning segment; the sequence is MIMQLSMSIGVTIAGLLLGLF. Residues 417 to 430 are Periplasmic-facing; it reads GSQHVSVDSGTTQT. The helical transmembrane segment at 431-451 threads the bilayer; it reads VFMYTWLSMAFIIALPAFVFA. Residues 452-471 lie on the Cytoplasmic side of the membrane; sequence RVPSDTHQNVAISRRKRSAQ.

It belongs to the major facilitator superfamily. TCR/Tet family.

It localises to the cell inner membrane. The polypeptide is Putative multidrug resistance protein MdtD (Escherichia coli O1:K1 / APEC).